We begin with the raw amino-acid sequence, 900 residues long: Suppressor of activated egl-4 protein 1 (900 aa).

3 disordered regions span residues 1–75 (MPPP…HLPT), 340–380 (PVAE…SRKN), and 406–425 (WASTSSADEKMQTERKESLE). The span at 53–75 (ASGQQHRPSIMSGQSHQNNHLPT) shows a compositional bias: polar residues. 2 stretches are compositionally biased toward basic and acidic residues: residues 358-377 (GDMKHLMNGKKRSEDGDGPS) and 412-425 (ADEKMQTERKESLE). An ELM2 domain is found at 451-544 (PHINLGKNYQ…AAVEDLLRSD (94 aa)). One can recognise an SANT domain in the interval 560–611 (NDSVLWTPDEIYQFQDAIYQSEKDFDKVAVELPGKSVKECVQFYYTWKKDCP). A disordered region spans residues 710–729 (PTAPRAHHTPSASASKKGAQ). The C2H2-type zinc finger occupies 736–758 (FHCRLCDKCFEKVKSLNAHMKSH).

In terms of assembly, may be a component of a histone deacetylase complex containing saeg-2, saeg-1 and hda-2. May interact with egl-4. In terms of tissue distribution, ubiquitously expressed.

The protein resides in the nucleus. In terms of biological role, as a likely component of a histone deacetylase complex, together with saeg-2 and hda-2, functions downstream of the cAMP-dependent kinase egl-4 to regulate the expression of genes required for egg-laying and foraging. The polypeptide is Suppressor of activated egl-4 protein 1 (Caenorhabditis elegans).